The chain runs to 123 residues: MALKIRLARAGSKKRPYYHVVVADVRAPRDGRFIETVGSWNPVLPKDAERVKLDAERIQHWIAQGAQPTDRVLRFLDQAGIAKRPSRNNPTKGEPGKKAQERLALAKQAEEEAAAKAAEAASE.

The interval 79-123 (AGIAKRPSRNNPTKGEPGKKAQERLALAKQAEEEAAAKAAEAASE) is disordered.

Belongs to the bacterial ribosomal protein bS16 family.

The sequence is that of Small ribosomal subunit protein bS16 from Brucella melitensis biotype 2 (strain ATCC 23457).